The following is a 516-amino-acid chain: D-alanine--D-alanyl carrier protein ligase (516 aa).

156–157 (TS) lines the ATP pocket. Asp203 serves as a coordination point for D-alanine. Residue 298-303 (NAYGPT) participates in ATP binding. D-alanine is bound at residue Val307. ATP contacts are provided by residues Asp389, 401 to 404 (YGGR), and Lys503. Lys503 is a D-alanine binding site.

This sequence belongs to the ATP-dependent AMP-binding enzyme family. DltA subfamily.

The protein localises to the cytoplasm. It carries out the reaction holo-[D-alanyl-carrier protein] + D-alanine + ATP = D-alanyl-[D-alanyl-carrier protein] + AMP + diphosphate. The protein operates within cell wall biogenesis; lipoteichoic acid biosynthesis. Its function is as follows. Catalyzes the first step in the D-alanylation of lipoteichoic acid (LTA), the activation of D-alanine and its transfer onto the D-alanyl carrier protein (Dcp) DltC. In an ATP-dependent two-step reaction, forms a high energy D-alanyl-AMP intermediate, followed by transfer of the D-alanyl residue as a thiol ester to the phosphopantheinyl prosthetic group of the Dcp. D-alanylation of LTA plays an important role in modulating the properties of the cell wall in Gram-positive bacteria, influencing the net charge of the cell wall. This is D-alanine--D-alanyl carrier protein ligase from Streptococcus pneumoniae serotype 4 (strain ATCC BAA-334 / TIGR4).